Consider the following 273-residue polypeptide: Terpene cyclase ascF (273 aa).

7 helical membrane-spanning segments follow: residues 18 to 38 (VYEATFQFGGVAWTLCYILIA), 49 to 69 (MPLFALANNFAWEMVYALWVV), 78 to 98 (MTIWMLIDTPIIYSILKHGVL), 113 to 133 (ILVGLIALCAAAHWSWQSWWI), 153 to 173 (YWAVSMCQFLVSTMSLAMLCV), 178 to 198 (GGVSWMIWLSRFLGTLIGLNM), and 217 to 237 (APAVFVWGVTTVCDIIYGFVL).

The protein belongs to the paxB family.

The protein resides in the membrane. It carries out the reaction ilicicolin A epoxide = ilicicolin C. It functions in the pathway secondary metabolite biosynthesis; terpenoid biosynthesis. Its function is as follows. Terpene cyclase; part of the asc-1 gene cluster that mediates the biosynthesis of both ascochlorin and ascofuranone, a strong inhibitor of cyanide-insensitive alternative oxidases and a promising drug candidate against African trypanosomiasis. The first step in the pathway is performed by the non-reducing polyketide synthase ascC that produces orsellinic acid by condensing acetyl-CoA with 3 malonyl-CoA units. Orsellinic acid is then prenylated by the prenyltransferase ascA to yield ilicicolinic acid B. Ilicicolinic acid B is further reduced to ilicicolin B by the reductase ascB. The halogenase ascD then chlorinates ilicicolin B to produce ilicicolin A which is converted to ilicicolin A epoxide by the cytochrome P450 monooxygenase ascE that catalyzes stereoselective epoxidation of the terminal double bond of the prenyl group. Ilicicolin A epoxide is the last common precursor for the biosynthesis of ascofuranone and ascochlorin. The terpene cyclase ascF produces a monocyclic terpene, and the cyclization reaction is proposed to be initiated by protonation of the terminal epoxide of ilicicolin A epoxide to generate a monocyclic tertiarycation, which is followed by a series of hydride and methyl shifts with abstraction of proton, leading to the formation of the (14S,15R,19R)-trimethylcyclohexanone ring structure of ilicicolin C, which is finally reduced to ascochlorin by the dehydrogenase ascG. On the other hand, ilicicolin A epoxide is hydroxylated by the cytochrome P450 monooxygenase ascH, and the resultant product is cyclized by the terpene cyclase ascI to ascofuranol via protonation-initiated epoxide ring opening, which facilitates the 6-endo-tet cyclization to form the tetrahy-drofuran ring. Finally, ascofuranol is oxidized into ascofuranone by ascJ. The chain is Terpene cyclase ascF from Acremonium egyptiacum (Oospora egyptiaca).